The following is a 413-amino-acid chain: Cell division protein FtsZ 2 (413 aa).

GTP is bound by residues 132 to 134 (GTG), E171, R175, and D218.

Belongs to the FtsZ family. As to quaternary structure, homodimer. Polymerizes to form a dynamic ring structure in a strictly GTP-dependent manner. Interacts directly with several other division proteins.

The protein resides in the cytoplasm. Its function is as follows. Essential cell division protein that forms a contractile ring structure (Z ring) at the future cell division site. The regulation of the ring assembly controls the timing and the location of cell division. One of the functions of the FtsZ ring is to recruit other cell division proteins to the septum to produce a new cell wall between the dividing cells. Binds GTP and shows GTPase activity. The protein is Cell division protein FtsZ 2 of Thermococcus kodakarensis (strain ATCC BAA-918 / JCM 12380 / KOD1) (Pyrococcus kodakaraensis (strain KOD1)).